Consider the following 280-residue polypeptide: Suppressor of disruption of TFIIS (280 aa).

The protein belongs to the SSM1 family.

Its function is as follows. Could be an enzyme that inactivates 6-azauracil by modifying it. In Saccharomyces cerevisiae (strain ATCC 204508 / S288c) (Baker's yeast), this protein is Suppressor of disruption of TFIIS (SDT1).